We begin with the raw amino-acid sequence, 131 residues long: MSAATDEILEKLKSLSLLEAAELVKQIEETFGVSAAAPVGGMMMAAPGAVPGAAAEPEEEKTEFDVILEEVPADKKIAILKVVRTITGLGLKEAKDLVESTPKPIKEGTNKDDAEETKKKLEEAGAKVTVK.

Positions 99-125 are enriched in basic and acidic residues; it reads ESTPKPIKEGTNKDDAEETKKKLEEAG. Residues 99 to 131 form a disordered region; it reads ESTPKPIKEGTNKDDAEETKKKLEEAGAKVTVK.

The protein belongs to the bacterial ribosomal protein bL12 family. As to quaternary structure, homodimer. Part of the ribosomal stalk of the 50S ribosomal subunit. Forms a multimeric L10(L12)X complex, where L10 forms an elongated spine to which 2 to 4 L12 dimers bind in a sequential fashion. Binds GTP-bound translation factors.

Functionally, forms part of the ribosomal stalk which helps the ribosome interact with GTP-bound translation factors. Is thus essential for accurate translation. In Gloeothece citriformis (strain PCC 7424) (Cyanothece sp. (strain PCC 7424)), this protein is Large ribosomal subunit protein bL12.